The primary structure comprises 421 residues: Protein PHLOEM UNLOADING MODULATOR (421 aa).

The next 7 membrane-spanning stretches (helical) occupy residues 30–50 (LMPV…LFYK), 60–80 (IPFL…ALCV), 124–144 (HIIG…SVVF), 158–178 (YIFT…STIL), 286–306 (AMAW…LFVA), 323–343 (CIVA…IWSA), and 397–417 (TVFA…ALTL).

This sequence belongs to the sphingomyelin synthase family.

It localises to the membrane. It participates in sphingolipid metabolism. In terms of biological role, catalyzes the biosynthesis of sphingolipids with very long-chain fatty acid (VLCFA). Required for the formation of plasmodesmal cytoplasmic sleeve during the transition from type I to type II plasmodesmata to modulate post-sieve elements (SE) unloading and symplastic cell-to-cell molecular trafficking at the phloem pole pericycle (PPP)-endodermis interface in roots. This is Protein PHLOEM UNLOADING MODULATOR from Arabidopsis thaliana (Mouse-ear cress).